Reading from the N-terminus, the 336-residue chain is Protein YIPF3 (336 aa).

Positions 1–73 (MSAPGGGRSG…AGAGGEEDGE (73 aa)) are disordered. Residues 1-143 (MSAPGGGRSG…PVKMINFPQK (143 aa)) are Cytoplasmic-facing. Residues 55-73 (EEEEEAEGEAGAGGEEDGE) show a composition bias toward acidic residues. A helical transmembrane segment spans residues 144 to 164 (IAGELYGPLMLVFTLVAILLH). Residues 165–182 (GMKTSDTIIREGTLMGTA) are Lumenal-facing. A helical transmembrane segment spans residues 183-203 (IGTCFGYWLGVSSFIYFLAYL). Topologically, residues 204-209 (CNAQIT) are cytoplasmic. A helical membrane pass occupies residues 210 to 230 (MVQMLSLLGYGLFGHCITLLV). Residues 231–239 (TYNIHFHSL) lie on the Lumenal side of the membrane. A helical transmembrane segment spans residues 240-260 (FYIFWLVVGGLSTLRMVAVLV). Residues 261-269 (SRTVGHTQR) lie on the Cytoplasmic side of the membrane. The helical transmembrane segment at 270–290 (LILCGTLAALHMLFLLYLHFA) threads the bilayer. At 291–336 (YHKVVEGILDTLEGPNMPPFQRVARDIPVVSNAVLNTTAKANAMTL) the chain is on the lumenal side. A glycan (N-linked (GlcNAc...) asparagine) is linked at N326.

It belongs to the YIP1 family.

The protein localises to the cell membrane. It is found in the golgi apparatus. It localises to the cis-Golgi network membrane. Its subcellular location is the cytoplasm. Functionally, involved in the maintenance of the Golgi structure. May play a role in hematopoiesis. This chain is Protein YIPF3 (YIPF3), found in Gallus gallus (Chicken).